Reading from the N-terminus, the 147-residue chain is Probable cytidine deaminase (147 aa).

Positions 4–130 (EELEKCIDAA…KLLPGLFSQE (127 aa)) constitute a CMP/dCMP-type deaminase domain. 45-51 (NVENSSY) contacts substrate. A Zn(2+)-binding site is contributed by Cys-56. The active-site Proton donor is Glu-58. Zn(2+)-binding residues include Cys-90 and Cys-93.

The protein belongs to the cytidine and deoxycytidylate deaminase family. Zn(2+) serves as cofactor.

The enzyme catalyses cytidine + H2O + H(+) = uridine + NH4(+). It catalyses the reaction 2'-deoxycytidine + H2O + H(+) = 2'-deoxyuridine + NH4(+). This enzyme scavenges exogenous and endogenous cytidine and 2'-deoxycytidine for UMP synthesis. This Dictyostelium discoideum (Social amoeba) protein is Probable cytidine deaminase (cda).